The sequence spans 434 residues: Putative MgpC-like protein MPN_149 (434 aa).

2 disordered regions span residues 168 to 193 (GSGQESSWNSQRSQKVLKNNPGPKAV) and 215 to 267 (EPLD…DNNG). The span at 170 to 184 (GQESSWNSQRSQKVL) shows a compositional bias: polar residues. Positions 218 to 229 (DSTKDGKGKDES) are enriched in basic and acidic residues. The span at 248 to 267 (STGSQMAAVTDSQQSGDNNG) shows a compositional bias: polar residues.

The protein belongs to the MgpC family.

This Mycoplasma pneumoniae (strain ATCC 29342 / M129 / Subtype 1) (Mycoplasmoides pneumoniae) protein is Putative MgpC-like protein MPN_149.